The following is a 315-amino-acid chain: Transposase for insertion sequence element IS640 (315 aa).

Residues 5–66 (EDFYMIKQMR…PFMDYIDMRL (62 aa)) form the HTH IS21-type domain. One can recognise an Integrase catalytic domain in the interval 111-285 (FETQPGYQLQ…TPEQRSRWSR (175 aa)).

The protein belongs to the transposase IS21/IS408/IS1162 family.

Functionally, involved in the transposition of the insertion sequence. The polypeptide is Transposase for insertion sequence element IS640 (istA) (Shigella sonnei).